The following is a 108-amino-acid chain: Mitochondrial pyruvate carrier 4 (108 aa).

The next 3 helical transmembrane spans lie at Ile19–Ile35, Ile51–Ile67, and Leu74–Ala90.

The protein belongs to the mitochondrial pyruvate carrier (MPC) (TC 2.A.105) family.

The protein resides in the mitochondrion inner membrane. Functionally, mediates the uptake of pyruvate into mitochondria. The protein is Mitochondrial pyruvate carrier 4 of Arabidopsis thaliana (Mouse-ear cress).